Reading from the N-terminus, the 741-residue chain is Photosystem I P700 chlorophyll a apoprotein A2 1 (741 aa).

8 helical membrane passes run 46–69 (IFATHFGHLAIIFLWASSLLFHVA), 135–158 (LYTGSVFLLLFASLFLFAGWLHLQ), 175–199 (LNHHLAGLFGVSSLAWAGHLIHVAI), 273–291 (MAHHHLAIAVLFIVAGHMY), 334–357 (LHFQLGWHLACLGVVTSWVAQHMY), 373–399 (AALYTHHQYIAIFLMVGAFAHGAIFLV), 421–443 (AIISHLSWVSLFLGFHTLGLYVH), and 524–542 (FLVHHAIALGLHTTTLILV). Residues Cys566 and Cys575 each coordinate [4Fe-4S] cluster. The next 2 membrane-spanning stretches (helical) occupy residues 582–603 (SFYLSLFWALNTVGWVTFYWHW) and 650–672 (LSVWAWMFLFGHLVWATGFMFLI). Residues His661, Met669, and Tyr677 each coordinate chlorophyll a. Residue Trp678 coordinates phylloquinone. The chain crosses the membrane as a helical span at residues 714–734 (VVGLAHFTVGYVLTYAAFLIA).

It belongs to the PsaA/PsaB family. In terms of assembly, the PsaA/B heterodimer binds the P700 chlorophyll special pair and subsequent electron acceptors. PSI consists of a core antenna complex that captures photons, and an electron transfer chain that converts photonic excitation into a charge separation. The cyanobacterial PSI reaction center is composed of one copy each of PsaA,B,C,D,E,F,I,J,K,L,M and X, and forms trimeric complexes. Requires PSI electron transfer chain: 5 chlorophyll a, 1 chlorophyll a', 2 phylloquinones and 3 4Fe-4S clusters. PSI core antenna: 90 chlorophyll a, 22 carotenoids, 3 phospholipids and 1 galactolipid. P700 is a chlorophyll a/chlorophyll a' dimer, A0 is one or more chlorophyll a, A1 is one or both phylloquinones and FX is a shared 4Fe-4S iron-sulfur center. as cofactor.

Its subcellular location is the cellular thylakoid membrane. It catalyses the reaction reduced [plastocyanin] + hnu + oxidized [2Fe-2S]-[ferredoxin] = oxidized [plastocyanin] + reduced [2Fe-2S]-[ferredoxin]. PsaA and PsaB bind P700, the primary electron donor of photosystem I (PSI), as well as the electron acceptors A0, A1 and FX. PSI is a plastocyanin/cytochrome c6-ferredoxin oxidoreductase, converting photonic excitation into a charge separation, which transfers an electron from the donor P700 chlorophyll pair to the spectroscopically characterized acceptors A0, A1, FX, FA and FB in turn. Oxidized P700 is reduced on the lumenal side of the thylakoid membrane by plastocyanin or cytochrome c6. The protein is Photosystem I P700 chlorophyll a apoprotein A2 1 (psaB1) of Nostoc sp. (strain PCC 7120 / SAG 25.82 / UTEX 2576).